We begin with the raw amino-acid sequence, 224 residues long: Toxin coregulated pilin (224 aa).

The propeptide at 1–25 (MQLLKQLFKKKFVKEEHDKKTGQEG) is atypical leader sequence. Met26 is subject to N-methylmethionine. Residues 26–46 (MTLLEVIIVLGIMGVVSAGVV) form a helical membrane-spanning segment. Residues Cys145 and Cys211 are joined by a disulfide bond.

The protein resides in the fimbrium. Its subcellular location is the membrane. Major component of the toxin co-regulated pilus (tcp) which is a type IV pilus essential for bacterial aggregation and subsequent colonization in the host small intestine. The protein is Toxin coregulated pilin (tcpA) of Vibrio cholerae serotype O1 (strain ATCC 39315 / El Tor Inaba N16961).